The sequence spans 201 residues: MSPDLLGALLVAAGYLAGSIPFGVVLGRLVLGVDVRTVGSGNIGATNVARAGGKKMGVLVLVLDAAKAIVPILVARRVLAGTPHAEVWVTAVAVAAFVGHLFPVWLGFKGGKGVATGLGIFAVLAPWAALAGLVGYAVAYGLTRISSVGSLTGTTLCAAGGFATYGPRHPISWAGLAIALLIFLRHRENIRRLVRGEEKKV.

The next 5 helical transmembrane spans lie at 5-25 (LLGA…FGVV), 55-75 (KMGV…ILVA), 88-108 (WVTA…WLGF), 118-138 (LGIF…GYAV), and 164-184 (TYGP…LIFL).

This sequence belongs to the PlsY family. As to quaternary structure, probably interacts with PlsX.

It localises to the cell inner membrane. The catalysed reaction is an acyl phosphate + sn-glycerol 3-phosphate = a 1-acyl-sn-glycero-3-phosphate + phosphate. It participates in lipid metabolism; phospholipid metabolism. Functionally, catalyzes the transfer of an acyl group from acyl-phosphate (acyl-PO(4)) to glycerol-3-phosphate (G3P) to form lysophosphatidic acid (LPA). This enzyme utilizes acyl-phosphate as fatty acyl donor, but not acyl-CoA or acyl-ACP. The polypeptide is Glycerol-3-phosphate acyltransferase (Anaeromyxobacter sp. (strain K)).